The chain runs to 577 residues: Proline--tRNA ligase (577 aa).

The protein belongs to the class-II aminoacyl-tRNA synthetase family. ProS type 1 subfamily. As to quaternary structure, homodimer.

The protein resides in the cytoplasm. The catalysed reaction is tRNA(Pro) + L-proline + ATP = L-prolyl-tRNA(Pro) + AMP + diphosphate. Its function is as follows. Catalyzes the attachment of proline to tRNA(Pro) in a two-step reaction: proline is first activated by ATP to form Pro-AMP and then transferred to the acceptor end of tRNA(Pro). As ProRS can inadvertently accommodate and process non-cognate amino acids such as alanine and cysteine, to avoid such errors it has two additional distinct editing activities against alanine. One activity is designated as 'pretransfer' editing and involves the tRNA(Pro)-independent hydrolysis of activated Ala-AMP. The other activity is designated 'posttransfer' editing and involves deacylation of mischarged Ala-tRNA(Pro). The misacylated Cys-tRNA(Pro) is not edited by ProRS. This chain is Proline--tRNA ligase, found in Helicobacter pylori (strain G27).